Reading from the N-terminus, the 110-residue chain is Ribonuclease P protein component 4 (110 aa).

Zn(2+) is bound by residues Cys-65, Cys-68, Cys-94, and Cys-97.

It belongs to the eukaryotic/archaeal RNase P protein component 4 family. In terms of assembly, consists of a catalytic RNA component and at least 5 protein subunits. It depends on Zn(2+) as a cofactor.

The protein resides in the cytoplasm. The enzyme catalyses Endonucleolytic cleavage of RNA, removing 5'-extranucleotides from tRNA precursor.. Its function is as follows. Part of ribonuclease P, a protein complex that generates mature tRNA molecules by cleaving their 5'-ends. This is Ribonuclease P protein component 4 from Methanococcus maripaludis (strain DSM 14266 / JCM 13030 / NBRC 101832 / S2 / LL).